Here is a 186-residue protein sequence, read N- to C-terminus: Napin embryo-specific (186 aa).

The signal sequence occupies residues 1–21 (MANKLFLVSATLALFFLLTNA). 2 propeptides span residues 22 to 38 (SVYRTVVEVDEDDATNP) and 77 to 97 (PSWTLDGEFDFEDDVENQQQG).

This sequence belongs to the 2S seed storage albumins family. As to quaternary structure, the mature protein consists of a small and a large chain linked by disulfide bonds. In terms of tissue distribution, cotyledons and the axis.

Its function is as follows. The small, basic, water-soluble napins are one of the two major kinds of storage proteins synthesized in the seed during its maturation. The polypeptide is Napin embryo-specific (Brassica napus (Rape)).